We begin with the raw amino-acid sequence, 1085 residues long: Activating transcription factor 7-interacting protein 1 (1085 aa).

Disordered stretches follow at residues 1 to 22 (MDNT…RASD), 47 to 109 (GKHE…VNVT), 127 to 245 (LGSN…NTDS), 329 to 381 (PNKS…VHSK), 469 to 499 (AAKE…ANAN), 517 to 560 (RNVG…TSSP), 650 to 843 (ASTN…TTIH), 889 to 910 (NSVR…QTGS), and 932 to 975 (GAPQ…ANTS). The segment covering 54 to 64 (SDLNSPLSNTD) has biased composition (polar residues). Composition is skewed to basic and acidic residues over residues 82 to 91 (SEIKRPESRA) and 133 to 150 (NFHE…RESD). Composition is skewed to polar residues over residues 151 to 165 (TPSG…NSFS) and 173 to 182 (NDITIISNSP). Composition is skewed to basic and acidic residues over residues 347–379 (EREV…DSVH) and 469–479 (AAKEDMKKKQE). The stretch at 446–480 (NKRHKTVLTELQAKITRLTKRFGAAKEDMKKKQEN) forms a coiled coil. Low complexity-rich tracts occupy residues 487-499 (SSGK…ANAN), 529-547 (APVS…TPAS), and 651-666 (STNT…VSSP). Polar residues predominate over residues 667–717 (GVQRNSPASAGSVRTTLAVQAVSTTHPVAQTTRTSLPTVGTSGLHNSTSSR). A compositionally biased stretch (low complexity) spans 732-743 (TAPTEPPTITAP). 3 stretches are compositionally biased toward polar residues: residues 746–775 (ENQT…VTGS), 792–810 (SSQA…AQSI), and 830–843 (TGVP…TTIH). Over residues 950 to 968 (PRPVHPAPLPEAPQPPRLP) the composition is skewed to pro residues. The Fibronectin type-III domain occupies 976-1082 (LPQKPQLKLA…DPQSTDVISS (107 aa)).

It belongs to the MCAF family.

It is found in the nucleus. In terms of biological role, recruiter that couples transcriptional factors to general transcription apparatus and thereby modulates transcription regulation and chromatin formation. Can both act as an activator or a repressor depending on the context. Mediates MBD1-dependent transcriptional repression, probably by recruiting complexes containing histone methyltransferase activity. May belong to a complex that represses transcription and couples DNA methylation and histone H3 'Lys-9' trimethylation (H3K9me3). This is Activating transcription factor 7-interacting protein 1 (ATF7IP) from Gallus gallus (Chicken).